We begin with the raw amino-acid sequence, 331 residues long: Putative heme-binding peroxidase (331 aa).

His-50 acts as the Proton acceptor in catalysis. Residue His-174 coordinates heme b. The active-site Tryptophan radical intermediate is the Trp-190. The tract at residues 288–331 (INTDNQKGGYRSAPKKSDSTPATSGQPGASKTGGCPVMHHKAKL) is disordered. Residues 306–316 (STPATSGQPGA) are compositionally biased toward polar residues.

Belongs to the peroxidase family. Cytochrome c peroxidase subfamily. Requires heme b as cofactor.

In terms of biological role, destroys radicals which are normally produced within the cells and which are toxic to biological systems. The sequence is that of Putative heme-binding peroxidase from Gibberella zeae (strain ATCC MYA-4620 / CBS 123657 / FGSC 9075 / NRRL 31084 / PH-1) (Wheat head blight fungus).